A 434-amino-acid polypeptide reads, in one-letter code: Putative nuclease OPG089 (434 aa).

Belongs to the XPG/RAD2 endonuclease family. FEN1 subfamily. The cofactor is Mg(2+).

The protein localises to the virion. Functionally, putative nuclease that seems to be required for double-strand break repair, homologous recombination, and production of full-length viral genomic DNA. The polypeptide is Putative nuclease OPG089 (OPG089) (Monkeypox virus).